The sequence spans 145 residues: Enhancer of mRNA-decapping protein 2 (145 aa).

Disordered stretches follow at residues 1-74 and 89-115; these read MGSE…DKAT and PKKK…IDSK. The span at 29–42 shows a compositional bias: polar residues; it reads TKTQILVPPTQSLP. The span at 55–73 shows a compositional bias: basic and acidic residues; the sequence is QRREPRERTSKTGHEDDKA. The segment covering 89 to 102 has biased composition (basic residues); it reads PKKKSCKYKKKKTR.

The protein belongs to the EDC family.

The protein localises to the cytoplasm. It is found in the nucleus. MRNA-binding protein which stimulates mRNA decapping by DCP1 and DCP2. The chain is Enhancer of mRNA-decapping protein 2 (EDC2) from Saccharomyces cerevisiae (strain ATCC 204508 / S288c) (Baker's yeast).